The primary structure comprises 288 residues: UTP--glucose-1-phosphate uridylyltransferase (288 aa).

This sequence belongs to the UDPGP type 2 family.

It carries out the reaction alpha-D-glucose 1-phosphate + UTP + H(+) = UDP-alpha-D-glucose + diphosphate. The protein operates within glycolipid metabolism; diglucosyl-diacylglycerol biosynthesis. In terms of biological role, catalyzes the formation of UDP-glucose from glucose-1-phosphate and UTP. This is an intermediate step in the biosynthesis of diglucosyl-diacylglycerol (Glc2-DAG), i.e. the predominant glycolipid found in the S.aureus membrane, which is also used as a membrane anchor for lipoteichoic acid (LTA). This is UTP--glucose-1-phosphate uridylyltransferase (gtaB) from Staphylococcus aureus (strain MRSA252).